The following is a 132-amino-acid chain: Fertilization-influencing membrane protein (132 aa).

A helical membrane pass occupies residues 100-120 (PGLFHHILVGLLVVAFFFLLF).

Testis-specific.

It localises to the cell membrane. In terms of biological role, may play a role in sperm-oocyte fusion during fertilization. This Homo sapiens (Human) protein is Fertilization-influencing membrane protein.